The primary structure comprises 806 residues: Lon protease (806 aa).

A Lon N-terminal domain is found at 14–207 (YPVLPLRDIV…KALGFMEGEI (194 aa)). 359–366 (GPPGVGKT) contacts ATP. Residues 594–775 (DDQVGVVTGL…GEVIAHALLR (182 aa)) enclose the Lon proteolytic domain. Catalysis depends on residues serine 681 and lysine 724. The disordered stretch occupies residues 786–806 (SQPAALPSVDSQDEAGTSIAH).

This sequence belongs to the peptidase S16 family. Homohexamer. Organized in a ring with a central cavity.

It is found in the cytoplasm. It catalyses the reaction Hydrolysis of proteins in presence of ATP.. ATP-dependent serine protease that mediates the selective degradation of mutant and abnormal proteins as well as certain short-lived regulatory proteins. Required for cellular homeostasis and for survival from DNA damage and developmental changes induced by stress. Degrades polypeptides processively to yield small peptide fragments that are 5 to 10 amino acids long. Binds to DNA in a double-stranded, site-specific manner. In R.meliloti it is important for controlling the turnover of a constitutively expressed protein(s) that, when unregulated, disrupts normal nodule formation and normal growth. This Rhizobium meliloti (strain 1021) (Ensifer meliloti) protein is Lon protease.